The primary structure comprises 92 residues: Small ribosomal subunit protein uS19c (92 aa).

The protein belongs to the universal ribosomal protein uS19 family.

Its subcellular location is the plastid. The protein localises to the chloroplast. Protein S19 forms a complex with S13 that binds strongly to the 16S ribosomal RNA. The chain is Small ribosomal subunit protein uS19c from Phaeodactylum tricornutum (strain CCAP 1055/1).